The following is a 451-amino-acid chain: Jacalin-related lectin 35 (451 aa).

At alanine 2 the chain carries N-acetylalanine. Jacalin-type lectin domains are found at residues 2–143 (AKKL…YIIP), 156–297 (LTKL…YIIP), and 306–448 (SNTI…NVAP).

It belongs to the jacalin lectin family. Component of the PYK10 complex, at least composed of PYK10/BGLU23, BGLU21, BGLU22, JAL22, JAL23, PBP1/JAL30, PBP2/JAL31, JAL32, JAL33, JAL34, JAL35, GLL22 and GLL23.

This chain is Jacalin-related lectin 35 (JAL35), found in Arabidopsis thaliana (Mouse-ear cress).